A 435-amino-acid chain; its full sequence is Actin-like protein 7A (435 aa).

Residues 1–64 (MWAPPAAIMG…TESKAAKERP (64 aa)) are disordered. Residues 20–31 (QAPLQTQALQTA) are compositionally biased toward low complexity. Residues 31 to 51 (ASLRDGPAKRAVWVRHTSSEP) are required for interaction with TES. Positions 55–64 (TESKAAKERP) are enriched in basic and acidic residues.

The protein belongs to the actin family. In terms of assembly, interacts (via N-terminus) with TES (via LIM domain 2). Heterodimer with TES; the heterodimer interacts with ENAH to form a heterotrimer. Interacts with ACTL9. Interacts with CYLC1; the interaction may be relevant for proper acrosome attachment to the nuclear envelope. Strongly expressed in testis. Also expressed in other tissues.

It localises to the cytoplasm. Its subcellular location is the cytoskeleton. The protein localises to the golgi apparatus. The protein resides in the nucleus. It is found in the cytoplasmic vesicle. It localises to the secretory vesicle. Its subcellular location is the acrosome. Functionally, essential for normal spermatogenesis and male fertility. Required for normal sperm head morphology, acroplaxome formation, acrosome attachment, and acrosome granule stability. May anchor and stabilize acrosomal adherence to the acroplaxome at least in part by facilitating the presence of F-actin in the subacrosomal space. May play an important role in formation and fusion of Golgi-derived vesicles during acrosome biogenesis. The protein is Actin-like protein 7A (ACTL7A) of Homo sapiens (Human).